A 569-amino-acid polypeptide reads, in one-letter code: Estrogen receptor (569 aa).

The tract at residues 1–151 (MYPKEEHSAG…GFDSGKETRF (151 aa)) is modulating. The segment covering 28–37 (PTQTFGTSSP) has biased composition (polar residues). A disordered region spans residues 28 to 65 (PTQTFGTSSPAEPASVGYYPAPPDPHEEHLQTLGGGSS). NR C4-type zinc fingers lie at residues 152–172 (CAVC…CEGC) and 188–212 (CPAT…LRKC). Residues 152-217 (CAVCSDYASG…RLRKCYEVGM (66 aa)) constitute a DNA-binding region (nuclear receptor). The interval 218-278 (MKGGIRKDRG…SGGVVSTLCM (61 aa)) is hinge. The tract at residues 223–271 (RKDRGGRSVRRERRRSSNEDRDKSSSDQCSRAGVRTTGPQDKRKKRSGG) is disordered. The segment covering 237–247 (RSSNEDRDKSS) has biased composition (basic and acidic residues). The NR LBD domain occupies 279–515 (SPDQVLLLLL…DLLLEMLDAQ (237 aa)). The segment covering 523–532 (VQRVWSQSEK) has biased composition (polar residues). The tract at residues 523-569 (VQRVWSQSEKNPPSTPTTSSSSSNNSPRGGAAAIQSNGACHSHSPDP) is disordered. Over residues 538–549 (PTTSSSSSNNSP) the composition is skewed to low complexity.

This sequence belongs to the nuclear hormone receptor family. NR3 subfamily. Binds DNA as a homodimer. Can form a heterodimer with ER-beta.

It is found in the nucleus. Functionally, the steroid hormones and their receptors are involved in the regulation of eukaryotic gene expression and affect cellular proliferation and differentiation in target tissues. The protein is Estrogen receptor (esr1) of Danio rerio (Zebrafish).